Consider the following 235-residue polypeptide: MSKTSKAYRAAAAKVDRTNLYTPLQAAKLAKETSSTKQDATVEVAIRLGVDPRKADQMVRGTVNLPHGTGKTARVAVFAVGEKADAAVAAGADVVGSDDLIERIQGGWLEFDAAIAAPDQMAKVGRIARVLGPRGLMPNPKTGTVTADVAKAVADIKGGKINFRVDKQANLHFVIGKASFDEKLLAENYGAAIDEVLRLKPSSSKGRYLKKITVSTTTGPGIPVDPSITRNFAGE.

Belongs to the universal ribosomal protein uL1 family. Part of the 50S ribosomal subunit.

Binds directly to 23S rRNA. The L1 stalk is quite mobile in the ribosome, and is involved in E site tRNA release. In terms of biological role, protein L1 is also a translational repressor protein, it controls the translation of the L11 operon by binding to its mRNA. The chain is Large ribosomal subunit protein uL1 from Mycobacterium bovis (strain ATCC BAA-935 / AF2122/97).